A 516-amino-acid chain; its full sequence is Delta(24)-sterol reductase (516 aa).

The signal sequence occupies residues 1–22 (MEPAVSLAVCALLFLLWVRVKG). Residues 23–31 (LEFVLIHQR) are Lumenal-facing. Residues 32–52 (WVFVCLFLLPLSLIFDIYYYV) traverse the membrane as a helical segment. Residues 53–516 (RAWVVFKLSS…YDKICKAARH (464 aa)) lie on the Cytoplasmic side of the membrane. The FAD-binding PCMH-type domain occupies 58–234 (FKLSSAPRLH…VAAEIRIIPA (177 aa)). 163 to 175 (TVGGLIMGTGIES) is an FAD binding site.

It belongs to the FAD-binding oxidoreductase/transferase type 4 family. As to quaternary structure, interacts with DHCR7; this interaction regulates DHCR7 activity. The cofactor is FAD.

Its subcellular location is the endoplasmic reticulum membrane. It localises to the golgi apparatus membrane. It catalyses the reaction cholesterol + NADP(+) = desmosterol + NADPH + H(+). The enzyme catalyses lanosterol + NADPH + H(+) = 24,25-dihydrolanosterol + NADP(+). The catalysed reaction is 5alpha-cholest-8-en-3beta-ol + NADP(+) = zymosterol + NADPH + H(+). It functions in the pathway steroid biosynthesis; cholesterol biosynthesis. In terms of biological role, catalyzes the reduction of the delta-24 double bond of sterol intermediates during cholesterol biosynthesis. In addition to its cholesterol-synthesizing activity, can protect cells from oxidative stress by reducing caspase 3 activity during apoptosis induced by oxidative stress. Also protects against amyloid-beta peptide-induced apoptosis. This Rattus norvegicus (Rat) protein is Delta(24)-sterol reductase (Dhcr24).